The chain runs to 326 residues: uncharacterized protein (326 aa).

28-35 (GPINSGKT) is an ATP binding site.

It belongs to the archaeal ATPase family.

This is an uncharacterized protein from Pyrococcus abyssi (strain GE5 / Orsay).